Here is a 325-residue protein sequence, read N- to C-terminus: GMP reductase (325 aa).

The active-site Thioimidate intermediate is Cys174. Position 203-226 (203-226) interacts with NADP(+); sequence LIADGGIRTHGDIAKSIRFGASMV.

This sequence belongs to the IMPDH/GMPR family. GuaC type 2 subfamily.

It catalyses the reaction IMP + NH4(+) + NADP(+) = GMP + NADPH + 2 H(+). In terms of biological role, catalyzes the irreversible NADPH-dependent deamination of GMP to IMP. It functions in the conversion of nucleobase, nucleoside and nucleotide derivatives of G to A nucleotides, and in maintaining the intracellular balance of A and G nucleotides. In Staphylococcus aureus (strain NCTC 8325 / PS 47), this protein is GMP reductase.